A 514-amino-acid polypeptide reads, in one-letter code: Na(+)/H(+) antiporter NhaB (514 aa).

12 helical membrane passes run 23–43, 52–72, 97–117, 120–140, 144–164, 202–222, 238–258, 303–323, 357–377, 391–411, 447–467, and 475–495; these read LALL…SFVA, IFTL…LLAI, LLLM…LFIF, LLLS…AAAF, FLDA…FYGI, LMMH…VGEP, FFLR…LTCM, AIIG…VGLI, LTVF…APII, LFYL…VGTI, ATPN…APLI, and VWMA…CVEF.

This sequence belongs to the NhaB Na(+)/H(+) (TC 2.A.34) antiporter family.

The protein localises to the cell inner membrane. It carries out the reaction 2 Na(+)(in) + 3 H(+)(out) = 2 Na(+)(out) + 3 H(+)(in). In terms of biological role, na(+)/H(+) antiporter that extrudes sodium in exchange for external protons. This chain is Na(+)/H(+) antiporter NhaB, found in Salmonella arizonae (strain ATCC BAA-731 / CDC346-86 / RSK2980).